The chain runs to 277 residues: UPF0276 protein PP_0992 (277 aa).

Belongs to the UPF0276 family.

The chain is UPF0276 protein PP_0992 from Pseudomonas putida (strain ATCC 47054 / DSM 6125 / CFBP 8728 / NCIMB 11950 / KT2440).